A 645-amino-acid polypeptide reads, in one-letter code: Threonine--tRNA ligase (645 aa).

The 63-residue stretch at 1–63 folds into the TGS domain; sequence MEQINIQFPD…ETDGSIEIVT (63 aa). The interval 242-540 is catalytic; it reads DHRKIGKELE…LTEETKGAFP (299 aa). Positions 336, 387, and 517 each coordinate Zn(2+).

The protein belongs to the class-II aminoacyl-tRNA synthetase family. In terms of assembly, homodimer. It depends on Zn(2+) as a cofactor.

The protein localises to the cytoplasm. The enzyme catalyses tRNA(Thr) + L-threonine + ATP = L-threonyl-tRNA(Thr) + AMP + diphosphate + H(+). Its function is as follows. Catalyzes the attachment of threonine to tRNA(Thr) in a two-step reaction: L-threonine is first activated by ATP to form Thr-AMP and then transferred to the acceptor end of tRNA(Thr). Also edits incorrectly charged L-seryl-tRNA(Thr). This chain is Threonine--tRNA ligase, found in Staphylococcus aureus (strain NCTC 8325 / PS 47).